Consider the following 371-residue polypeptide: Neuropeptide S receptor (371 aa).

At 1–52 the chain is on the extracellular side; the sequence is MPANLTEGSFHANQTVPMLDSSPVACTEIVTFTEALVAEEWGSFYSSFKTEQ. Residues N4 and N13 are each glycosylated (N-linked (GlcNAc...) asparagine). The chain crosses the membrane as a helical span at residues 53–73; that stretch reads LITLWVLFVVTIVGNSVVLFS. Topologically, residues 74–82 are cytoplasmic; that stretch reads TCRRKRKSR. The chain crosses the membrane as a helical span at residues 83–103; the sequence is MTFFVTQLAITDSFTGLINIL. Residues 104–123 are Extracellular-facing; the sequence is TDIIWRFTGDFMAPDLVCRV. C121 and C197 are disulfide-bonded. A helical membrane pass occupies residues 124–144; sequence VRYLQVVLLYASTYVLVSLSI. The Cytoplasmic segment spans residues 145–164; it reads DRYHAIVYPMKFLQGEKQAK. The chain crosses the membrane as a helical span at residues 165-185; the sequence is VLIGIAWSLSFLFSIPTLIIF. Over 186-212 the chain is Extracellular; sequence GKRTLSNGEVQCWALWPDDSYWTPYMT. Residues 213-233 form a helical membrane-spanning segment; sequence IVAFLVYFIPLAIISVIYGLV. Topologically, residues 234-275 are cytoplasmic; the sequence is IRTIWMKSKTHETVISNCSDGKLCCSYNRGLISKAKIKAIKY. A helical transmembrane segment spans residues 276-296; the sequence is SIVIILAFICCWSPYFLFDIL. Topologically, residues 297–312 are extracellular; it reads DNFNVLPDTKERFYAS. A helical membrane pass occupies residues 313-333; it reads VIIQNLPALNSAINPLIYCIF. Topologically, residues 334 to 371 are cytoplasmic; that stretch reads SSSICSPCKMQRSQDSRMTYRERSERHEMQILSKPEFI.

Belongs to the G-protein coupled receptor 1 family. Vasopressin/oxytocin receptor subfamily.

It localises to the cell membrane. G-protein coupled receptor for neuropeptide S (NPS). Promotes mobilization of intracellular Ca(2+) stores. Inhibits cell growth in response to NPS binding. Involved in pathogenesis of asthma and other IgE-mediated diseases. This Mus musculus (Mouse) protein is Neuropeptide S receptor (Npsr1).